We begin with the raw amino-acid sequence, 663 residues long: Methionine--tRNA ligase (663 aa).

Positions 10 to 20 match the 'HIGH' region motif; the sequence is AYTNGPLHLGH. C142, C145, C154, and C157 together coordinate Zn(2+). Positions 323–327 match the 'KMSKS' region motif; sequence KMSTS. ATP is bound at residue T326. Positions 563-663 constitute a tRNA-binding domain; it reads YFGNIDLRVG…RDLPVGSKIH (101 aa).

This sequence belongs to the class-I aminoacyl-tRNA synthetase family. MetG type 1 subfamily. In terms of assembly, homodimer. Requires Zn(2+) as cofactor.

It is found in the cytoplasm. It catalyses the reaction tRNA(Met) + L-methionine + ATP = L-methionyl-tRNA(Met) + AMP + diphosphate. In terms of biological role, is required not only for elongation of protein synthesis but also for the initiation of all mRNA translation through initiator tRNA(fMet) aminoacylation. This is Methionine--tRNA ligase from Methanococcus maripaludis (strain C5 / ATCC BAA-1333).